The chain runs to 224 residues: Serum amyloid P-component (224 aa).

Residues methionine 1 to cysteine 20 form the signal peptide. A Pentraxin (PTX) domain is found at lysine 25–aspartate 224. An N-linked (GlcNAc...) asparagine glycan is attached at asparagine 52. The cysteines at positions 56 and 115 are disulfide-linked. Positions 78, 79, 156, 157, 158, and 168 each coordinate Ca(2+).

The protein belongs to the pentraxin family. In terms of assembly, homopentamer. Pentraxin (or pentaxin) have a discoid arrangement of 5 non-covalently bound subunits. It depends on Ca(2+) as a cofactor.

The protein resides in the secreted. The protein is Serum amyloid P-component (Apcs) of Mus musculus (Mouse).